Consider the following 25-residue polypeptide: GMKDYFKKLLQKVIKKIKSFRKKQD.

In terms of tissue distribution, expressed by the venom gland.

The protein localises to the secreted. In terms of biological role, may have cytolytic and antimicrobial activity. This chain is Oxyopinin-3c, found in Oxyopes takobius (Lynx spider).